The following is a 503-amino-acid chain: MSIKAEEISSLIKQQLEHYDDKLDIEEVGVVTYVGDGIARAHGLNNVLSSELLQFDNGAYGIAQNLESNDVGIIILGKFDDIREGDRVKRTGRIMEVPVGDALIGRVVNPLGQPVDGLGEIKTDKTRPIESKAPGVMQRQSVNQPLQTGIKAIDALVPIGRGQRELVIGDRKTGKTSLAIDTILNQKGQDVICIYVSIGQKESTVRAQVETLKKLGAMDYTIVVEAGPSEPAPMLYIAPYSGIAMGEEFMYAGKDVLVVFDDLSKQAVAYRELSLLLRRPPGREAYPGDVFYLHSRLLERSAKLSKELGGGSLTALPVIQTEAGDISAYIPTNVISITDGQIFLQSDMFFSGTRPAIDAGASVSRVGGAAQIPAMKKVAGTLRTDLASYRELESFAQFGSDLDQATQAKLARGRRTVEVLKQPLHKPVAVEKQVVLLYALTHGFMDAVPVDDIARFEQELYTDFDANHADLLAEIKSTGKLPDENKLQEALQQFASSFSSSNK.

Gly169–Thr176 contributes to the ATP binding site.

Belongs to the ATPase alpha/beta chains family. As to quaternary structure, F-type ATPases have 2 components, CF(1) - the catalytic core - and CF(0) - the membrane proton channel. CF(1) has five subunits: alpha(3), beta(3), gamma(1), delta(1), epsilon(1). CF(0) has three main subunits: a(1), b(2) and c(9-12). The alpha and beta chains form an alternating ring which encloses part of the gamma chain. CF(1) is attached to CF(0) by a central stalk formed by the gamma and epsilon chains, while a peripheral stalk is formed by the delta and b chains.

It localises to the cell membrane. The enzyme catalyses ATP + H2O + 4 H(+)(in) = ADP + phosphate + 5 H(+)(out). Its function is as follows. Produces ATP from ADP in the presence of a proton gradient across the membrane. The alpha chain is a regulatory subunit. The protein is ATP synthase subunit alpha of Lactobacillus delbrueckii subsp. bulgaricus (strain ATCC 11842 / DSM 20081 / BCRC 10696 / JCM 1002 / NBRC 13953 / NCIMB 11778 / NCTC 12712 / WDCM 00102 / Lb 14).